Reading from the N-terminus, the 620-residue chain is Chaperone protein HscA homolog (620 aa).

Belongs to the heat shock protein 70 family.

Functionally, chaperone involved in the maturation of iron-sulfur cluster-containing proteins. Has a low intrinsic ATPase activity which is markedly stimulated by HscB. This chain is Chaperone protein HscA homolog, found in Neisseria meningitidis serogroup B (strain ATCC BAA-335 / MC58).